The sequence spans 81 residues: Glutaredoxin-like protein NrdH (81 aa).

The region spanning 1–81 (MRITIYTRND…LHPAPHAASA (81 aa)) is the Glutaredoxin domain. A disulfide bond links cysteine 11 and cysteine 14.

This sequence belongs to the glutaredoxin family.

Functionally, electron transport system for the ribonucleotide reductase system NrdEF. This Escherichia coli O157:H7 protein is Glutaredoxin-like protein NrdH (nrdH).